Here is a 128-residue protein sequence, read N- to C-terminus: MYLNQRIKFFLERVVRMMDENRSKGNRWGVWAFFGILLVPLLVPLLCCAGPILLVALGSTGIGALFAGATGNWWLTGIFAALAIVMIALILSKLLKNKYNSPEGNGKTKNKTDCCTPPESVDRKHETR.

2 helical membrane-spanning segments follow: residues 28 to 48 (WGVW…LLCC) and 71 to 91 (GNWW…ALIL). Hg(2+) is bound by residues C47 and C48. The interval 101 to 128 (SPEGNGKTKNKTDCCTPPESVDRKHETR) is disordered. Residues C114 and C115 each contribute to the Hg(2+) site.

It is found in the cell membrane. Its function is as follows. Involved in mercuric transport. Passes a mercury ion from the MerP protein to the mercuric reductase MerA. The protein is Mercuric transport protein (merT) of Staphylococcus aureus.